Reading from the N-terminus, the 141-residue chain is Vesicle-associated membrane protein 4 (141 aa).

The tract at residues 1–51 (MPPKFKRHLNDDDVTGSVKSERRNLLEDDSDEEEDFFLRGPSGPRFGPRND) is disordered. Over 1-115 (MPPKFKRHLN…RRQMWWRGCK (115 aa)) the chain is Cytoplasmic. A phosphoserine mark is found at Ser17 and Ser30. A v-SNARE coiled-coil homology domain is found at 52–112 (KIKHVQNQVD…KQLRRQMWWR (61 aa)). The chain crosses the membrane as a helical; Anchor for type IV membrane protein span at residues 116–136 (IKAIMALVAVILLLVIIILIV). Topologically, residues 137–141 (VKYRT) are vesicular.

It belongs to the synaptobrevin family. As to quaternary structure, identified in a complex containing STX6, STX12, VAMP4 and VTI1A. Interacts with BAIAP3; this interaction is increased in the presence of calcium.

The protein localises to the golgi apparatus. Its subcellular location is the trans-Golgi network membrane. Involved in the pathway that functions to remove an inhibitor (probably synaptotagmin-4) of calcium-triggered exocytosis during the maturation of secretory granules. May be a marker for this sorting pathway that is critical for remodeling the secretory response of granule. The polypeptide is Vesicle-associated membrane protein 4 (VAMP4) (Bos taurus (Bovine)).